A 512-amino-acid chain; its full sequence is HMG box-containing protein 1 (512 aa).

The interval 151–180 (RPPPVASSKGEPAFPHHWKEQTPVRHERAN) is disordered. Residues 167-180 (HWKEQTPVRHERAN) show a composition bias toward basic and acidic residues. Positions 201-343 (WCNSWPSTAW…PPGHPDAINF (143 aa)) constitute an AXH domain. Positions 432–500 (CKRPMNAFML…EQKRLNPDCW (69 aa)) form a DNA-binding region, HMG box.

Binds TCF4. Binds RB1. Binds the second PAH repeat of SIN3A. Post-translationally, ubiquitinated by the CTLH E3 ubiquitin-protein ligase complex, leading to subsequent proteasomal degradation.

Its subcellular location is the nucleus. Its function is as follows. Transcriptional repressor that binds to the promoter region of target genes. Plays a role in the regulation of the cell cycle and of the Wnt pathway. Binds preferentially to the sequence 5'-TTCATTCATTCA-3'. Binding to the histone H1.0 promoter is enhanced by interaction with RB1. Disrupts the interaction between DNA and TCF4. This chain is HMG box-containing protein 1 (HBP1), found in Bos taurus (Bovine).